The chain runs to 391 residues: MAKAKFERNKPHVNIGTIGHVDHGKTTLTAAITKYFGEFRAYDQIDGAPEERARGITISTAHVEYESDTRHYAHVDCPGHADYVKNMITGAAQMDGAILVVNAADGPMPQTREHILLGRQVGIPYMVVYMNKVDQVDDPELIELVEMEIRELLSSYDYPGDDIPIIKGSALAAMNGTDKEIGEDSIRALIAAVDEYIPTPARAVDQPFLMPVEDVFSISGRGTVATGRIERGVVKVGEELEIVGIRPSKKTVCTGVEMFRKLLDQGEAGDNVGLLLRGVDRDGIERGQVLCKPGSVKPHTKFEAEAYILTKEEGGRHTPFFANYRPQFYFRTTDVTGTVQLPEGTEMVMPGDNLKFNVELIAPIAMEEKLRFAIREGGRTVGAGVVSKIIA.

Residues 10-201 form the tr-type G domain; it reads KPHVNIGTIG…AVDEYIPTPA (192 aa). The segment at 19–26 is G1; that stretch reads GHVDHGKT. A GTP-binding site is contributed by 19–26; the sequence is GHVDHGKT. Thr26 lines the Mg(2+) pocket. The G2 stretch occupies residues 55–59; that stretch reads GITIS. Residues 76 to 79 form a G3 region; sequence DCPG. Residues 76–80 and 131–134 contribute to the GTP site; these read DCPGH and NKVD. The G4 stretch occupies residues 131–134; sequence NKVD. A G5 region spans residues 169–171; sequence SAL.

Belongs to the TRAFAC class translation factor GTPase superfamily. Classic translation factor GTPase family. EF-Tu/EF-1A subfamily. Monomer.

It localises to the cytoplasm. It carries out the reaction GTP + H2O = GDP + phosphate + H(+). Functionally, GTP hydrolase that promotes the GTP-dependent binding of aminoacyl-tRNA to the A-site of ribosomes during protein biosynthesis. The protein is Elongation factor Tu of Cereibacter sphaeroides (strain ATCC 17029 / ATH 2.4.9) (Rhodobacter sphaeroides).